Consider the following 695-residue polypeptide: MDLHSLLELGTKPTAPHVRNKKVILFDTNHQVSICNQIIDAINSGIDLGDLLEGGLLTLCVEHYYNSDKDKFNTSPVAKYLRDAGYEFDVIKNADATRFLDVSPNEPHYSPLILALKTLESTESQRGRIGLFLSFCSLFLPKLVVGDRASIEKALRQVTVHQEQGIVTYPNHWLTTGHMKVIFGILRSSFILKFVLIHQGVNLVTGHDAYDSIISNSVGQTRFSGLLIVKTVLEFILQKTDSGVTLHPLVRTSKVKNEVASFKQALSNLARHGEYAPFARVLNLSGINNLEHGLYPQLSAIALGVATAHGSTLAGVNVGEQYQQLREAAHDAEVKLQRRHEHQEIQAIAEDDEERKILEQFHLQKTEITHSQTLAVLSQKREKLARLAAEIENNIVEDQGFKQSQNRVSQSFLNDPTPVEVTVQARPMNRPTALPPPVDDKIEHESTEDSSSSSSFVDLNDPFALLNEDEDTLDDSVMIPGTTSREFQGIPEPPRQSQDLNNSQGKQEDESTNRIKKQFLRYQELPPVQEDDESEYTTDSQESIDQPGSDNEQGVDLPPPPLYAQEKRQDPIQHPAANPQDPFGSIGDVNGDILEPIRSPSSPSAPQEDTRMREAYELSPDFTNDEDNQQNWPQRVVTKKGRTFLYPNDLLQTNPPESLITALVEEYQNPVSAKELQADWPDMSFDERRHVAMNL.

2 coiled-coil regions span residues 316-341 and 372-399; these read VNVG…RRHE and QTLA…VEDQ. Residues 424 to 611 are disordered; the sequence is QARPMNRPTA…SPSAPQEDTR (188 aa). A compositionally biased stretch (basic and acidic residues) spans 438–447; sequence VDDKIEHEST. 2 stretches are compositionally biased toward polar residues: residues 495–505 and 537–552; these read RQSQDLNNSQG and TTDS…SDNE. Positions 603-606 match the PTAP/PSAP motif motif; that stretch reads PSAP.

It belongs to the filoviruses nucleoprotein family. In terms of assembly, homooligomer. Homomultimerizes to form the nucleocapsid. Binds to viral genomic RNA. Interacts with VP35 and VP30 to form the nucleocapsid. Also interacts with VP24 and VP40. Phosphorylated.

The protein localises to the virion. It localises to the host cytoplasm. In terms of biological role, encapsidates the genome, protecting it from nucleases. The encapsidated genomic RNA is termed the nucleocapsid and serves as template for transcription and replication. During replication, encapsidation by NP is coupled to RNA synthesis and all replicative products are resistant to nucleases. This chain is Nucleoprotein (NP), found in Chlorocebus aethiops (Green monkey).